The sequence spans 159 residues: Protein RseC (159 aa).

Over 1-72 (MIKEWATVVS…QKVELGIAEG (72 aa)) the chain is Cytoplasmic. A helical transmembrane segment spans residues 73–95 (SLLSSALLVYMSPLVGLFLIASL). Topologically, residues 96–98 (FQL) are periplasmic. Residues 99 to 121 (LFASDVAALCGAILGGIGGFLIA) traverse the membrane as a helical segment. The Cytoplasmic portion of the chain corresponds to 122 to 159 (RGYSRKFAARAEWQPIILSVALPPGLVRFETSSEDASQ).

The protein belongs to the RseC family.

It is found in the cell inner membrane. May play a role in reduction of the SoxR iron-sulfur cluster. May work together with the RsxABCDGE complex. The protein is Protein RseC of Escherichia coli (strain K12).